The following is a 331-amino-acid chain: Terpene synthase 8 (331 aa).

A DDxx(x)D/E motif motif is present at residues 97 to 102; that stretch reads DDFYLE. Positions 228-236 match the NDxxSxxxD/E motif motif; that stretch reads NDIYSFNKE.

Belongs to the terpene synthase family.

In terms of biological role, terpene synthase that converts its substrate farnesyl diphosphate (FPP) into several yet unidentified sesquiterpenes. This is Terpene synthase 8 from Dictyostelium purpureum (Slime mold).